A 953-amino-acid polypeptide reads, in one-letter code: UvrABC system protein A (953 aa).

33-40 is a binding site for ATP; the sequence is GLSGSGKS. 2 ABC transporter domains span residues 320 to 599 and 619 to 949; these read WGST…EESI and GHDN…RYLK. 652–659 serves as a coordination point for ATP; the sequence is GVSGSGKS. The segment at 752 to 778 adopts a C4-type zinc-finger fold; it reads CEACQGDGLIKIEMHFLPDVYVKCDIC.

Belongs to the ABC transporter superfamily. UvrA family. In terms of assembly, forms a heterotetramer with UvrB during the search for lesions.

It is found in the cytoplasm. Functionally, the UvrABC repair system catalyzes the recognition and processing of DNA lesions. UvrA is an ATPase and a DNA-binding protein. A damage recognition complex composed of 2 UvrA and 2 UvrB subunits scans DNA for abnormalities. When the presence of a lesion has been verified by UvrB, the UvrA molecules dissociate. The polypeptide is UvrABC system protein A (Rickettsia prowazekii (strain Madrid E)).